Reading from the N-terminus, the 888-residue chain is Collagen alpha chain (888 aa).

The disordered stretch occupies residues Ala-1 to Glu-627. Residues Gly-3–Gly-60 enclose the Collagen-like 1 domain. 2 stretches are compositionally biased toward low complexity: residues Pro-59–Thr-73 and Thr-148–Ile-164. Residues Arg-179–Arg-190 show a composition bias toward basic and acidic residues. The segment covering Pro-194–Pro-203 has biased composition (low complexity). Residues Ser-311–Ser-320 are compositionally biased toward pro residues. The span at Ser-422–Asn-440 shows a compositional bias: low complexity. The segment covering Gly-441–Gly-450 has biased composition (gly residues). 2 stretches are compositionally biased toward low complexity: residues Glu-460–Pro-475 and Glu-508–Lys-518. The Collagen-like 2 domain occupies Gly-513–Glu-571. Pro residues predominate over residues Pro-610–Gln-622. The Fibrillar collagen NC1 domain maps to Glu-661–His-884. 2 cysteine pairs are disulfide-bonded: Cys-731-Cys-882 and Cys-793-Cys-833.

Belongs to the fibrillar collagen family. As to expression, component of the acid-insoluble organic matrix of the aragonitic skeleton (at protein level).

It localises to the secreted. In Acropora millepora (Staghorn coral), this protein is Collagen alpha chain.